Consider the following 388-residue polypeptide: Putative pyridoxal phosphate-dependent aminotransferase EpsN (388 aa).

K190 carries the N6-(pyridoxal phosphate)lysine modification.

The protein belongs to the DegT/DnrJ/EryC1 family. It depends on pyridoxal 5'-phosphate as a cofactor.

May be involved in the production of the exopolysaccharide (EPS) component of the extracellular matrix during biofilm formation. EPS is responsible for the adhesion of chains of cells into bundles. The polypeptide is Putative pyridoxal phosphate-dependent aminotransferase EpsN (epsN) (Bacillus subtilis (strain 168)).